A 783-amino-acid polypeptide reads, in one-letter code: MDPKLLLCLPQGDELFNPLNTMFIQMACILVFSQLFYLLLKPCGQAGPVAQILAGIVLSPVLLSRIPKVKEFFLQKNAADYYSFFSFALRTSFMFLIGLEVDLHFMRRNFKKAAVITLSSFVVSGLLSFASLMLFIPLFGIKEDYFTFFLVLLVTLSNTASPVVVRSIADWKLNTCEIGRLTISCALFIELTNVVLYTIIMAFISGTIILELFLFLLATVALILINMVLAPWLPKRNPKEKYLSKAETLVFFIFLLIIGITIESYDVNSSVSVFAIGIMFPRQGKTHRTLIQRLSYPIHEFVLPVYFGYIGFRFSIIALTKRFYLGIVIIVIVTIAGKFIGVISACMYLKIPKKYWLFLPTILSVKGHVGLLLLDSNYSEKKWWTTTIHDMMVAALVITTLVSGVLASFLLKTREKDFAYEKTSLESHNTNEELRILSCAYGVRHARGAISLVSALSGSRGASDPFTPLLMHLVPLPKKRKSELMYHEHDEDGGNANGDDEFGTNEGLEINDSIDSFAKDSKILIQQVKLVTQMLNMHEEICNATEDLRVSIVFLPFHKHQRIDGKTTNDGELFRQMNRNVLRHGPCSIGIFVDRNITGFQQPHGFDSVQHVATLFFGGPDDREALALCRWLANNTLIHLTVIQFVSEESKAETPVGNAMTRDNNEVFMEVLGRNQTEQETDRSFLEEFYNRFVTTGQVGFIEKLVSNGPHTLTILREIGEMYSLFVVGKSTGDCPMTVRMKDWEECPELGTVGDFLASSLDVNASVLVVQRQRHSHDSFIDD.

12 helical membrane-spanning segments follow: residues 19–39, 43–63, 81–101, 121–141, 145–165, 186–206, 208–228, 242–262, 300–320, 323–343, 355–375, and 391–411; these read LNTM…FYLL, CGQA…PVLL, YYSF…GLEV, FVVS…LFGI, YFTF…PVVV, ALFI…FISG, IILE…INMV, YLSK…GITI, EFVL…IALT, FYLG…IGVI, YWLF…LLLD, and MMVA…SFLL.

This sequence belongs to the monovalent cation:proton antiporter 2 (CPA2) transporter (TC 2.A.37) family. CHX (TC 2.A.37.4) subfamily. Specifically expressed in pollen.

The protein resides in the membrane. Functionally, may operate as a cation/H(+) antiporter. The polypeptide is Cation/H(+) antiporter 2 (CHX2) (Arabidopsis thaliana (Mouse-ear cress)).